The primary structure comprises 427 residues: Pseudouridylate synthase 1 homolog (427 aa).

The interval 20 to 83 (GPRPSCSPRM…DEERREKPPK (64 aa)) is disordered. The span at 44–79 (QDRRSCSGRAGGDRVWEDGEHPAKKLKSGGDEERRE) shows a compositional bias: basic and acidic residues. Residue Asp146 is the Nucleophile of the active site. Residues 407–427 (GGTGAKVPSPLEGSEGDGDTD) are disordered. Residues Ser415 and Ser420 each carry the phosphoserine modification. Thr426 carries the phosphothreonine modification.

This sequence belongs to the tRNA pseudouridine synthase TruA family. As to quaternary structure, monomer. Forms a complex with RARG and the SRA1 RNA in the nucleus. Widely expressed. High levels of expression found in brain and skeletal muscle.

It is found in the mitochondrion. The protein resides in the nucleus. Its subcellular location is the cytoplasm. It catalyses the reaction a uridine in tRNA = a pseudouridine in tRNA. The enzyme catalyses uridine(38/39/40) in tRNA = pseudouridine(38/39/40) in tRNA. It carries out the reaction a uridine in mRNA = a pseudouridine in mRNA. Its function is as follows. Pseudouridylate synthase that catalyzes pseudouridylation of tRNAs and mRNAs. Acts on positions 27/28 in the anticodon stem and also positions 34 and 36 in the anticodon of an intron containing tRNA. Also catalyzes pseudouridylation of mRNAs: mediates pseudouridylation of mRNAs with the consensus sequence 5'-UGUAG-3'. Acts as a regulator of pre-mRNA splicing by mediating pseudouridylation of pre-mRNAs at locations associated with alternatively spliced regions. Pseudouridylation of pre-mRNAs near splice sites directly regulates mRNA splicing and mRNA 3'-end processing. Involved in regulation of nuclear receptor activity through pseudouridylation of SRA1 mRNA. The chain is Pseudouridylate synthase 1 homolog from Homo sapiens (Human).